The sequence spans 370 residues: MSHPSPQAKPSNPSNPRVFFDVDIGGERVGRIVLELFADIVPKTAENFRALCTGEKGIGPTTGKPLHFKGCPFHRIIKKFMIQGGDFSNQNGTGGESIYGEKFEDENFHYKHDKEGLLSMANAGSNTNGSQFFITTVPTPHLDGKHVVFGQVIKGMGVAKILENVEVKGEKPAKLCVIAECGELKEGDDWGIFPKDGSGDSHPDFPEDADVDLKDVDKILLISEDLKNIGNTFFKSQNWEMAIKKYTKVLRYVEGSRAAAEDADGAKLQPVALSCVLNIGACKLKMSDWQGAVDSCLEALEIDPSNTKALYRRAQGWQGLKEYDQALADLKKAQEIAPEDKAIQAELLKVKQKIKAQKDKEKAAYAKMFA.

Phosphoserine is present on serine 5. Residues 19-183 (FFDVDIGGER…KLCVIAECGE (165 aa)) form the PPIase cyclophilin-type domain. Lysine 171 is modified (N6-acetyllysine). The tract at residues 185–215 (KEGDDWGIFPKDGSGDSHPDFPEDADVDLKD) is chaperone activity. Position 198 is a phosphoserine (serine 198). The tract at residues 214–370 (KDVDKILLIS…EKAAYAKMFA (157 aa)) is interaction with HSP90AB1. TPR repeat units follow at residues 223–256 (SEDL…VEGS), 273–306 (LSCV…DPSN), and 307–340 (TKAL…APED).

It belongs to the cyclophilin-type PPIase family. PPIase D subfamily. In terms of assembly, identified in ESR1 or NR3C1/GCR steroid receptor-chaperone complexes. Found in HSP90 chaperone complexes with kinase clients LCK or EIF2AK1. Two monomers associate with one HSP90 homodimer. Interacts with HSP90AA1. Interacts with HSP90AB1; PPID and FKBP4 compete for binding to HSP90AB1 and the interaction is mutually exclusive with the PPID:HSPA8 interaction. Interacts with HSPA8; PPID and STIP1 but not FKBP4 compete for binding to HSPA8 and the interaction is mutually exclusive with the PPID:HSP90AB1 interaction. Interacts with S100A1 and S100A2; the interactions dissociate the PPID:HSP90AA1 interaction. Interacts with S100A6. Interacts with MYB, ILF2, XRCC6, RACK1 and RPS3. Interacts with cytoplasmic dynein 1 intermediate chain (DYNC1I1 or DYNC1I2). In terms of processing, the N-terminus is blocked. In terms of tissue distribution, detected in heart, thymis and brain.

Its subcellular location is the cytoplasm. It localises to the nucleus. The protein resides in the nucleolus. The protein localises to the nucleoplasm. The enzyme catalyses [protein]-peptidylproline (omega=180) = [protein]-peptidylproline (omega=0). Its activity is regulated as follows. Less sensitive to inhibition by cyclosporin A than is CYP-18. Its function is as follows. PPIase that catalyzes the cis-trans isomerization of proline imidic peptide bonds in oligopeptides and may therefore assist protein folding. Proposed to act as a co-chaperone in HSP90 complexes such as in unligated steroid receptors heterocomplexes. Different co-chaperones seem to compete for association with HSP90 thus establishing distinct HSP90-co-chaperone-receptor complexes with the potential to exert tissue-specific receptor activity control. May have a preference for estrogen receptor complexes and is not found in glucocorticoid receptor complexes. May be involved in cytoplasmic dynein-dependent movement of the receptor from the cytoplasm to the nucleus. May regulate MYB by inhibiting its DNA-binding activity. Involved in regulation of AHR signaling by promoting the formation of the AHR:ARNT dimer; the function is independent of HSP90 but requires the chaperone activity. Involved in regulation of UV radiation-induced apoptosis. This Bos taurus (Bovine) protein is Peptidyl-prolyl cis-trans isomerase D.